Here is a 305-residue protein sequence, read N- to C-terminus: Succinate--CoA ligase [ADP-forming] subunit alpha (305 aa).

CoA is bound by residues 17–20 (TGKE), Lys43, and 96–98 (ITE). Tyr161 contacts substrate. Catalysis depends on His249, which acts as the Tele-phosphohistidine intermediate.

It belongs to the succinate/malate CoA ligase alpha subunit family. In terms of assembly, heterotetramer of two alpha and two beta subunits.

It carries out the reaction succinate + ATP + CoA = succinyl-CoA + ADP + phosphate. It catalyses the reaction GTP + succinate + CoA = succinyl-CoA + GDP + phosphate. The protein operates within carbohydrate metabolism; tricarboxylic acid cycle; succinate from succinyl-CoA (ligase route): step 1/1. Its function is as follows. Succinyl-CoA synthetase functions in the citric acid cycle (TCA), coupling the hydrolysis of succinyl-CoA to the synthesis of either ATP or GTP and thus represents the only step of substrate-level phosphorylation in the TCA. The alpha subunit of the enzyme binds the substrates coenzyme A and phosphate, while succinate binding and nucleotide specificity is provided by the beta subunit. The polypeptide is Succinate--CoA ligase [ADP-forming] subunit alpha (Aquifex aeolicus (strain VF5)).